The following is a 511-amino-acid chain: MKISLKCLNTHTAEIYRKCLLLSDSTVNVSSVDFTNQSKLNLLKQEKKSIESFNKNSLLNISNFRDLERQEKDIQKKTSKKVYKKSYSRSTKSIYSRTKIINERNKLHTLNQQIIFSTLARIHLKKKINLLFPVQEFLFELSKHRNKSAGSKSREYLEILLCVKKLKMFYGFIPLKQLHKILVQAKAMPGYFSKNFFSLIEKRLDVVLYRSGFTKTIVAARQACRHSQIYVNSKVCRIPSTILESGDIISYKNQLDSLKTAEIKNNLFSNINTNVSGNEVSNNVSNKVSNKISSTLALNKQSLLLLLFCAKSIYNESFFVSNKRKFKSNEVTFDNKKEITSAIDYTKYLQIKNSRKKYKLITLNNNLDSLSFNIFDKEILNSLSSKQNLPVNKQNIVEIENKKTNKFNTFSLLFQNLTSFSKSIESYSSVLALKLQDHLLNIKGKRNEVSKNINKIERSQKDNVFINILQKINRPTHLEISSITNSIIFLYSPQRIYLPFYVDIDILRKSL.

One can recognise an S4 RNA-binding domain in the interval 202-272 (KRLDVVLYRS…IKNNLFSNIN (71 aa)).

The protein belongs to the universal ribosomal protein uS4 family.

The protein resides in the mitochondrion. The polypeptide is Small ribosomal subunit protein uS4m (RPS4) (Prototheca wickerhamii).